Consider the following 417-residue polypeptide: Riboflavin biosynthesis protein RibBA (417 aa).

The tract at residues 1-204 (MTRLDSIERA…IADLIEWRRK (204 aa)) is DHBP synthase. Residues 28 to 29 (RE), D33, 141 to 145 (RPGHT), and E165 contribute to the D-ribulose 5-phosphate site. Residue E29 participates in Mg(2+) binding. A Mg(2+)-binding site is contributed by H144. The segment at 205–417 (HEKHVQRIAE…LDDHPEADGA (213 aa)) is GTP cyclohydrolase II. A GTP-binding site is contributed by 259–263 (RVHSE). Residues C264, C275, and C277 each coordinate Zn(2+). GTP-binding positions include Q280, 303–305 (EGR), and T325. D337 (proton acceptor; for GTP cyclohydrolase activity) is an active-site residue. Catalysis depends on R339, which acts as the Nucleophile; for GTP cyclohydrolase activity. The GTP site is built by T360 and K365.

This sequence in the N-terminal section; belongs to the DHBP synthase family. The protein in the C-terminal section; belongs to the GTP cyclohydrolase II family. Mg(2+) serves as cofactor. The cofactor is Mn(2+). Zn(2+) is required as a cofactor.

It carries out the reaction D-ribulose 5-phosphate = (2S)-2-hydroxy-3-oxobutyl phosphate + formate + H(+). The catalysed reaction is GTP + 4 H2O = 2,5-diamino-6-hydroxy-4-(5-phosphoribosylamino)-pyrimidine + formate + 2 phosphate + 3 H(+). It functions in the pathway cofactor biosynthesis; riboflavin biosynthesis; 2-hydroxy-3-oxobutyl phosphate from D-ribulose 5-phosphate: step 1/1. Its pathway is cofactor biosynthesis; riboflavin biosynthesis; 5-amino-6-(D-ribitylamino)uracil from GTP: step 1/4. Its function is as follows. Catalyzes the conversion of D-ribulose 5-phosphate to formate and 3,4-dihydroxy-2-butanone 4-phosphate. Catalyzes the conversion of GTP to 2,5-diamino-6-ribosylamino-4(3H)-pyrimidinone 5'-phosphate (DARP), formate and pyrophosphate. The protein is Riboflavin biosynthesis protein RibBA of Mycobacteroides abscessus (strain ATCC 19977 / DSM 44196 / CCUG 20993 / CIP 104536 / JCM 13569 / NCTC 13031 / TMC 1543 / L948) (Mycobacterium abscessus).